Reading from the N-terminus, the 343-residue chain is uncharacterized protein (343 aa).

An ATP-binding site is contributed by 33–40 (GPKSSGKS).

Belongs to the archaeal ATPase family.

This is an uncharacterized protein from Methanocaldococcus jannaschii (strain ATCC 43067 / DSM 2661 / JAL-1 / JCM 10045 / NBRC 100440) (Methanococcus jannaschii).